Here is a 224-residue protein sequence, read N- to C-terminus: Mammalian ependymin-related protein 1 (224 aa).

The first 37 residues, 1–37, serve as a signal peptide directing secretion; the sequence is MPGRAPLHTVPGALGPWLLGCLWAWTLCGLCSLGAVG. Intrachain disulfides connect Cys42–Cys172, Cys88–Cys222, and Cys113–Cys210. N-linked (GlcNAc...) asparagine glycans are attached at residues Asn130 and Asn182.

The protein belongs to the ependymin family. Homodimer. Post-translationally, N-glycosylated; the glycan contains mannose-6-phosphate moieties.

Its subcellular location is the lysosome lumen. It localises to the secreted. In terms of biological role, binds anionic lipids and gangliosides at acidic pH. This Macaca fascicularis (Crab-eating macaque) protein is Mammalian ependymin-related protein 1 (EPDR1).